The primary structure comprises 173 residues: NADH-ubiquinone oxidoreductase chain 6 (173 aa).

A run of 5 helical transmembrane segments spans residues 1–21 (MTYFMLFLGLCFVLGGLGVAS), 27–47 (YGVVGLVLASVVGCGWLLSLG), 48–68 (VSFVSLVLFMVYLGGMLVVFV), 87–107 (VVGYGVSFIAVLVVGVVIGGL), and 139–159 (CGVGMFLVAGWGLLLTLFVVL).

The protein belongs to the complex I subunit 6 family.

It localises to the mitochondrion membrane. The enzyme catalyses a ubiquinone + NADH + 5 H(+)(in) = a ubiquinol + NAD(+) + 4 H(+)(out). Its function is as follows. Core subunit of the mitochondrial membrane respiratory chain NADH dehydrogenase (Complex I) that is believed to belong to the minimal assembly required for catalysis. Complex I functions in the transfer of electrons from NADH to the respiratory chain. The immediate electron acceptor for the enzyme is believed to be ubiquinone. The chain is NADH-ubiquinone oxidoreductase chain 6 (MT-ND6) from Synthliboramphus hypoleucus (Guadalupe murrelet).